The following is a 502-amino-acid chain: Glutamate decarboxylase 1 (502 aa).

Ser8 is modified (phosphoserine). An N6-(pyridoxal phosphate)lysine modification is found at Lys277. The calmodulin-binding stretch occupies residues 469–502 (LMVTVKKSDIDKQRDIITGWKKFVADRKKTSGIC).

Belongs to the group II decarboxylase family. In terms of assembly, homohexamer. Interacts with calmodulin with a 1:3 stoichiometry. Pyridoxal 5'-phosphate is required as a cofactor. In terms of tissue distribution, expressed in roots. Detected at low levels in shoots of young seedlings. Not detected in the root tips or in the central vascular bundle in the elongating region of mature roots.

The enzyme catalyses L-glutamate + H(+) = 4-aminobutanoate + CO2. Up-regulated by calmodulin binding at physiological pH. In terms of biological role, catalyzes the conversion of glutamate to 4-aminobutanoate (GABA). The calmodulin-binding is calcium-dependent and it is proposed to directly or indirectly form a calcium regulated control of GABA biosynthesis. The chain is Glutamate decarboxylase 1 (GAD1) from Arabidopsis thaliana (Mouse-ear cress).